A 228-amino-acid polypeptide reads, in one-letter code: uncharacterized protein (228 aa).

Transmembrane regions (helical) follow at residues 14-34 (HTISILLGYLLMGMTFGMLLV), 42-62 (VALFMSLFIYAGAVQFVAITL), 130-150 (FIFSISLLNHSYWIFGSLVGS), 156-176 (FSFDTQGMEFVMTAIFIVLFM), and 192-212 (IVIAVVCLALFGTEYFLLIAL).

Belongs to the AzlC family.

Its subcellular location is the cell membrane. This is an uncharacterized protein from Helicobacter pylori (strain ATCC 700392 / 26695) (Campylobacter pylori).